The sequence spans 250 residues: UDP-2,3-diacylglucosamine hydrolase (250 aa).

Mn(2+) contacts are provided by aspartate 8, histidine 10, aspartate 41, asparagine 79, and histidine 114. Residue asparagine 79–arginine 80 participates in substrate binding. Substrate is bound by residues aspartate 122, serine 160, aspartate 172, glutamine 175, and histidine 203. Mn(2+) is bound by residues histidine 203 and histidine 205.

Belongs to the LpxH family. It depends on Mn(2+) as a cofactor.

The protein localises to the cell inner membrane. The catalysed reaction is UDP-2-N,3-O-bis[(3R)-3-hydroxytetradecanoyl]-alpha-D-glucosamine + H2O = 2-N,3-O-bis[(3R)-3-hydroxytetradecanoyl]-alpha-D-glucosaminyl 1-phosphate + UMP + 2 H(+). It functions in the pathway glycolipid biosynthesis; lipid IV(A) biosynthesis; lipid IV(A) from (3R)-3-hydroxytetradecanoyl-[acyl-carrier-protein] and UDP-N-acetyl-alpha-D-glucosamine: step 4/6. Hydrolyzes the pyrophosphate bond of UDP-2,3-diacylglucosamine to yield 2,3-diacylglucosamine 1-phosphate (lipid X) and UMP by catalyzing the attack of water at the alpha-P atom. Involved in the biosynthesis of lipid A, a phosphorylated glycolipid that anchors the lipopolysaccharide to the outer membrane of the cell. This is UDP-2,3-diacylglucosamine hydrolase from Xylella fastidiosa (strain M23).